The chain runs to 280 residues: Shikimate dehydrogenase (NADP(+)) (280 aa).

Residues 18 to 20 (SRS) and T65 each bind shikimate. The active-site Proton acceptor is K69. Shikimate is bound by residues N90 and D105. Residues 130-134 (GAGGA), 154-159 (NRTLAR), and L219 contribute to the NADP(+) site. Y221 serves as a coordination point for shikimate. G242 is a binding site for NADP(+).

This sequence belongs to the shikimate dehydrogenase family. In terms of assembly, homodimer.

The enzyme catalyses shikimate + NADP(+) = 3-dehydroshikimate + NADPH + H(+). It participates in metabolic intermediate biosynthesis; chorismate biosynthesis; chorismate from D-erythrose 4-phosphate and phosphoenolpyruvate: step 4/7. In terms of biological role, involved in the biosynthesis of the chorismate, which leads to the biosynthesis of aromatic amino acids. Catalyzes the reversible NADPH linked reduction of 3-dehydroshikimate (DHSA) to yield shikimate (SA). This is Shikimate dehydrogenase (NADP(+)) from Mesorhizobium japonicum (strain LMG 29417 / CECT 9101 / MAFF 303099) (Mesorhizobium loti (strain MAFF 303099)).